The primary structure comprises 82 residues: Lectin-D2 (82 aa).

2 consecutive Chitin-binding type-1 domains span residues 1–42 (APEC…QCDY) and 43–82 (WRCG…SQCD). 4 disulfides stabilise this stretch: C4–C19, C13–C25, C18–C32, and C36–C40. A carbohydrate is bound by residues S20, W22, Y24, and Y31. Residue W43 participates in a carbohydrate binding. 4 cysteine pairs are disulfide-bonded: C45-C60, C54-C66, C59-C73, and C77-C81. S61, Y63, W65, and H72 together coordinate a carbohydrate.

As to quaternary structure, monomer.

In terms of biological role, N-acetyl-D-glucosamine binding lectin. Shows no hemagglutinating activity towards rabbit erythrocytes and weak activity towards trypsin-treated erythrocytes. Has mitogenic activity towards human peripheral blood lymphocytes (HPBL). In Phytolacca americana (American pokeweed), this protein is Lectin-D2.